Consider the following 228-residue polypeptide: Urease accessory protein UreE (228 aa).

Residues 188 to 228 (PLDEPHGSGLHIHAIHSHGDGHSHDHDHSHSHGDHDHDHKH) are disordered. Residues 204–228 (SHGDGHSHDHDHSHSHGDHDHDHKH) show a composition bias toward basic and acidic residues.

This sequence belongs to the UreE family.

The protein localises to the cytoplasm. In terms of biological role, involved in urease metallocenter assembly. Binds nickel. Probably functions as a nickel donor during metallocenter assembly. The protein is Urease accessory protein UreE of Yersinia kristensenii.